An 835-amino-acid chain; its full sequence is Protein translocase subunit SecA 1 (835 aa).

ATP contacts are provided by residues Q85, 103–107 (GEGKT), and D492. The interval 788–807 (VQGEAVHPSSDGEEAKKKPV) is disordered. 4 residues coordinate Zn(2+): C819, C821, C830, and C831.

The protein belongs to the SecA family. Monomer and homodimer. Part of the essential Sec protein translocation apparatus which comprises SecA, SecYEG and auxiliary proteins SecDF. Other proteins may also be involved. Requires Zn(2+) as cofactor.

Its subcellular location is the cell membrane. The protein localises to the cytoplasm. The enzyme catalyses ATP + H2O + cellular proteinSide 1 = ADP + phosphate + cellular proteinSide 2.. Part of the Sec protein translocase complex. Interacts with the SecYEG preprotein conducting channel. Has a central role in coupling the hydrolysis of ATP to the transfer of proteins into and across the cell membrane, serving as an ATP-driven molecular motor driving the stepwise translocation of polypeptide chains across the membrane. The protein is Protein translocase subunit SecA 1 of Bacillus thuringiensis subsp. konkukian (strain 97-27).